A 121-amino-acid polypeptide reads, in one-letter code: Histone H2B, sperm (121 aa).

A disordered region spans residues 1–30 (MPPKSGKGQKKAGKAKGAPRSDKKRRRKRK). A N,N-dimethylproline modification is found at proline 2. Serine 108 is a glycosylation site (O-linked (GlcNAc) serine). A Glycyl lysine isopeptide (Lys-Gly) (interchain with G-Cter in ubiquitin) cross-link involves residue lysine 116.

Belongs to the histone H2B family. As to quaternary structure, the nucleosome is a histone octamer containing two molecules each of H2A, H2B, H3 and H4 assembled in one H3-H4 heterotetramer and two H2A-H2B heterodimers. The octamer wraps approximately 147 bp of DNA. Monoubiquitination of Lys-116 gives a specific tag for epigenetic transcriptional activation and is also prerequisite for histone H3 'Lys-4' and 'Lys-79' methylation. In terms of processing, glcNAcylation at Ser-108 promotes monoubiquitination of Lys-116. It fluctuates in response to extracellular glucose, and associates with transcribed genes.

The protein resides in the nucleus. It is found in the chromosome. Its function is as follows. Core component of nucleosome. Nucleosomes wrap and compact DNA into chromatin, limiting DNA accessibility to the cellular machineries which require DNA as a template. Histones thereby play a central role in transcription regulation, DNA repair, DNA replication and chromosomal stability. DNA accessibility is regulated via a complex set of post-translational modifications of histones, also called histone code, and nucleosome remodeling. The polypeptide is Histone H2B, sperm (Marthasterias glacialis (Spiny starfish)).